We begin with the raw amino-acid sequence, 362 residues long: Heat-inducible transcription repressor HrcA (362 aa).

It belongs to the HrcA family.

Functionally, negative regulator of class I heat shock genes (grpE-dnaK-dnaJ and groELS operons). Prevents heat-shock induction of these operons. The chain is Heat-inducible transcription repressor HrcA from Bradyrhizobium sp. (strain BTAi1 / ATCC BAA-1182).